Consider the following 306-residue polypeptide: Pantothenate synthetase (306 aa).

Residue 37–44 participates in ATP binding; that stretch reads MGALHEGH. Residue His-44 is the Proton donor of the active site. Gln-69 contributes to the (R)-pantoate binding site. Gln-69 is a beta-alanine binding site. 155-158 contributes to the ATP binding site; that stretch reads GEKD. Gln-161 lines the (R)-pantoate pocket. ATP-binding positions include Val-184 and 192–195; that span reads KSSR.

Belongs to the pantothenate synthetase family. Homodimer.

It is found in the cytoplasm. The catalysed reaction is (R)-pantoate + beta-alanine + ATP = (R)-pantothenate + AMP + diphosphate + H(+). It participates in cofactor biosynthesis; (R)-pantothenate biosynthesis; (R)-pantothenate from (R)-pantoate and beta-alanine: step 1/1. Catalyzes the condensation of pantoate with beta-alanine in an ATP-dependent reaction via a pantoyl-adenylate intermediate. In Corynebacterium jeikeium (strain K411), this protein is Pantothenate synthetase.